The following is a 429-amino-acid chain: Enolase (429 aa).

Q162 is a binding site for (2R)-2-phosphoglycerate. E204 (proton donor) is an active-site residue. Mg(2+) is bound by residues D241, E282, and D309. The (2R)-2-phosphoglycerate site is built by K334, R363, S364, and K385. The active-site Proton acceptor is K334.

This sequence belongs to the enolase family. Mg(2+) is required as a cofactor.

Its subcellular location is the cytoplasm. The protein localises to the secreted. It is found in the cell surface. It carries out the reaction (2R)-2-phosphoglycerate = phosphoenolpyruvate + H2O. Its pathway is carbohydrate degradation; glycolysis; pyruvate from D-glyceraldehyde 3-phosphate: step 4/5. In terms of biological role, catalyzes the reversible conversion of 2-phosphoglycerate (2-PG) into phosphoenolpyruvate (PEP). It is essential for the degradation of carbohydrates via glycolysis. In Acidothermus cellulolyticus (strain ATCC 43068 / DSM 8971 / 11B), this protein is Enolase.